We begin with the raw amino-acid sequence, 245 residues long: Complement C1q subcomponent subunit A (245 aa).

Residues 1 to 22 form the signal peptide; that stretch reads METSQGWLVACVLTMTLVWTVA. The tract at residues 28–114 is disordered; the sequence is APNGKDGAPG…NPGNIRDQPR (87 aa). The 79-residue stretch at 31-109 folds into the Collagen-like domain; that stretch reads GKDGAPGNPG…KGVKGNPGNI (79 aa). 4-hydroxyproline occurs at positions 39 and 45. K48 is subject to 5-hydroxylysine. K48 carries an O-linked (Gal...) hydroxylysine; alternate glycan. A 4-hydroxyproline modification is found at P54. K67 is subject to 5-hydroxylysine. Residue K67 is glycosylated (O-linked (Gal...) hydroxylysine; alternate). 4-hydroxyproline occurs at positions 79 and 85. A compositionally biased stretch (low complexity) spans 79–99; that stretch reads PGNVGLPGPSGPLGDSGPQGL. K100 carries the 5-hydroxylysine modification. An O-linked (Gal...) hydroxylysine; alternate glycan is attached at K100. The region spanning 110 to 245 is the C1q domain; sequence RDQPRPAFSA…FSGFLIFPSA (136 aa). Residue N146 is glycosylated (N-linked (GlcNAc...) asparagine). Q199 lines the Ca(2+) pocket.

Core component of the complement C1 complex, a calcium-dependent complex composed of 1 molecule of the C1Q subcomplex, 2 molecules of C1R and 2 molecules of C1S. The C1Q subcomplex is composed 18 subunits: 3 chains of C1QA, C1QB, and C1QC trimerize to form 6 collagen-like triple helices connected to six globular ligand-recognition modules (C1q domain). Interacts with CR1 (via Sushi 24 and Sushi 25 domains). Interacts (via C-terminus) with CD33; this interaction activates CD33 inhibitory motifs. Post-translationally, O-linked glycans are assumed to be the Glc-Gal disaccharides typically found as secondary modifications of hydroxylated lysines in collagen-like domains.

The protein localises to the secreted. The protein resides in the cell surface. With respect to regulation, the C1Q subcomplex is inhibited by sulfated molecules, such as triterpenoid sulfates, heparan sulfate, or chondroitin sulfates. In terms of biological role, core component of the complement C1 complex, a multiprotein complex that initiates the classical pathway of the complement system, a cascade of proteins that leads to phagocytosis and breakdown of pathogens and signaling that strengthens the adaptive immune system. The classical complement pathway is initiated by the C1Q subcomplex of the C1 complex, which specifically binds IgG or IgM immunoglobulins complexed with antigens, forming antigen-antibody complexes on the surface of pathogens: C1QA, together with C1QB and C1QC, specifically recognizes and binds the Fc regions of IgG or IgM via its C1q domain. Immunoglobulin-binding activates the proenzyme C1R, which cleaves C1S, initiating the proteolytic cascade of the complement system. The C1Q subcomplex is activated by a hexamer of IgG complexed with antigens, while it is activated by a pentameric IgM. The C1Q subcomplex also recognizes and binds phosphatidylserine exposed on the surface of cells undergoing programmed cell death, possibly promoting activation of the complement system. The polypeptide is Complement C1q subcomponent subunit A (Mus musculus (Mouse)).